The chain runs to 734 residues: Translation initiation factor IF-2 (734 aa).

The segment at 39-110 (SKFAPRSSFT…TGKPETKKRE (72 aa)) is disordered. Over residues 82–110 (DYEKRKLAEQRATRRLKGDTGKPETKKRE) the composition is skewed to basic and acidic residues. A tr-type G domain is found at 238–405 (NRPPIVTVMG…SIVLQAEILD (168 aa)). Residues 247–254 (GHVDHGKT) are G1. Position 247-254 (247-254 (GHVDHGKT)) interacts with GTP. The segment at 272–276 (GITQH) is G2. Residues 293–296 (DTPG) are G3. GTP is bound by residues 293-297 (DTPGH) and 347-350 (NKCD). A G4 region spans residues 347 to 350 (NKCD). A G5 region spans residues 383–385 (SAK).

Belongs to the TRAFAC class translation factor GTPase superfamily. Classic translation factor GTPase family. IF-2 subfamily.

It localises to the cytoplasm. One of the essential components for the initiation of protein synthesis. Protects formylmethionyl-tRNA from spontaneous hydrolysis and promotes its binding to the 30S ribosomal subunits. Also involved in the hydrolysis of GTP during the formation of the 70S ribosomal complex. The protein is Translation initiation factor IF-2 of Pelagibacter ubique (strain HTCC1062).